The primary structure comprises 121 residues: Outer membrane lipoprotein BBA14 (121 aa).

Positions 1–19 are cleaved as a signal peptide; it reads MQIKNFPFLFLLNSLIIFS. C20 carries N-palmitoyl cysteine lipidation. C20 is lipidated: S-diacylglycerol cysteine.

Its subcellular location is the cell outer membrane. Functionally, outer membrane lipoprotein that could act as a component of a potential toxin-antitoxin system in B.burgdorferi which could serve as a plasmid stabilization mechanism in a growing bacterial population. This is Outer membrane lipoprotein BBA14 from Borreliella burgdorferi (strain ATCC 35210 / DSM 4680 / CIP 102532 / B31) (Borrelia burgdorferi).